The chain runs to 87 residues: Dynein light chain 1, cytoplasmic (87 aa).

This sequence belongs to the dynein light chain family. Homodimer. Cytoplasmic dynein consists of two catalytic heavy chains (HCs) and a number of non-catalytic subunits which present intermediate chains (ICs), light intermediate chains (LICs) and light chains (LCs). Component of the nuclear pore complex (NPC). NPC constitutes the exclusive means of nucleocytoplasmic transport. NPCs allow the passive diffusion of ions and small molecules and the active, nuclear transport receptor-mediated bidirectional transport of macromolecules such as proteins, RNAs, ribonucleoparticles (RNPs), and ribosomal subunits across the nuclear envelope. Due to its 8-fold rotational symmetry, all subunits are present with 8 copies or multiples thereof.

It localises to the cytoplasm. It is found in the cytoskeleton. The protein localises to the nucleus. Its subcellular location is the nuclear pore complex. Acts as one of several non-catalytic accessory components of the cytoplasmic dynein complex that are thought to be involved in linking dynein to cargos and to adapter proteins that regulate dynein function. Cytoplasmic dynein 1 acts as a motor for the intracellular retrograde motility of vesicles and organelles along microtubules. May play a role in changing or maintaining the spatial distribution of cytoskeletal structures. Also a component of the nuclear pore complex. This chain is Dynein light chain 1, cytoplasmic (DYN2), found in Kluyveromyces lactis (strain ATCC 8585 / CBS 2359 / DSM 70799 / NBRC 1267 / NRRL Y-1140 / WM37) (Yeast).